A 417-amino-acid polypeptide reads, in one-letter code: Diaminopimelate decarboxylase (417 aa).

Lys-61 is modified (N6-(pyridoxal phosphate)lysine). Residues Gly-240 and 275–278 (EPGR) contribute to the pyridoxal 5'-phosphate site. Residues Arg-278, Arg-314, and Tyr-318 each contribute to the substrate site. Cys-344 serves as the catalytic Proton donor. Positions 345 and 372 each coordinate substrate. Residue Tyr-372 coordinates pyridoxal 5'-phosphate.

It belongs to the Orn/Lys/Arg decarboxylase class-II family. LysA subfamily. Homodimer. It depends on pyridoxal 5'-phosphate as a cofactor.

The catalysed reaction is meso-2,6-diaminopimelate + H(+) = L-lysine + CO2. It participates in amino-acid biosynthesis; L-lysine biosynthesis via DAP pathway; L-lysine from DL-2,6-diaminopimelate: step 1/1. Its function is as follows. Specifically catalyzes the decarboxylation of meso-diaminopimelate (meso-DAP) to L-lysine. The polypeptide is Diaminopimelate decarboxylase (lysA) (Vibrio cholerae serotype O1 (strain ATCC 39315 / El Tor Inaba N16961)).